A 2003-amino-acid polypeptide reads, in one-letter code: Neurogenic locus notch homolog protein 4 (2003 aa).

The N-terminal stretch at 1–23 (MQPPSLLLLLLLLLLLCVSVVRP) is a signal peptide. EGF-like domains are found at residues 24–63 (RGLL…ETCQ), 64–115 (FPDP…ERCQ), 118–155 (LEDP…EQCQ), and 156–192 (LRDF…HACE). Over 24-1447 (RGLLCGSFPE…TAPPANQLPW (1424 aa)) the chain is Extracellular. 48 disulfide bridges follow: Cys28-Cys41, Cys35-Cys51, Cys53-Cys62, Cys68-Cys80, Cys74-Cys103, Cys105-Cys114, Cys122-Cys133, Cys127-Cys143, Cys145-Cys154, Cys160-Cys171, Cys165-Cys180, Cys182-Cys191, Cys198-Cys211, Cys205-Cys220, Cys222-Cys231, Cys238-Cys249, Cys243-Cys262, Cys264-Cys273, Cys280-Cys291, Cys285-Cys300, Cys302-Cys311, Cys318-Cys332, Cys326-Cys341, Cys343-Cys352, Cys359-Cys370, Cys364-Cys379, Cys381-Cys390, Cys396-Cys407, Cys401-Cys418, Cys420-Cys429, Cys436-Cys452, Cys446-Cys461, Cys463-Cys472, Cys479-Cys490, Cys484-Cys499, Cys501-Cys510, Cys517-Cys528, Cys522-Cys537, Cys539-Cys548, Cys555-Cys566, Cys560-Cys575, Cys577-Cys586, Cys593-Cys604, Cys598-Cys613, Cys615-Cys624, Cys629-Cys640, Cys634-Cys649, and Cys651-Cys658. In terms of domain architecture, EGF-like 5; calcium-binding spans 194–232 (DVNECFQDPGPCPKGTSCHNTLGSFQCLCPVGQEGPRCE). The region spanning 234–274 (RAGPCPPRGCSNGGTCQLMPEKDSTFHLCLCPPGFIGPDCE) is the EGF-like 6 domain. The 37-residue stretch at 276 to 312 (NPDNCVSHQCQNGGTCQDGLDTYTCLCPETWTGWDCS) folds into the EGF-like 7; calcium-binding domain. The EGF-like 8; calcium-binding domain maps to 314–353 (DVDECETQGPPHCRNGGTCQNSAGSFHCVCVSGWGGTSCE). The EGF-like 9; calcium-binding domain occupies 355–391 (NLDDCIAATCAPGSTCIDRVGSFSCLCPPGRTGLLCH). The EGF-like 10 domain maps to 392-430 (LEDMCLSQPCHGDAQCSTNPLTGSTLCLCQPGYSGPTCH). The EGF-like 11; calcium-binding domain occupies 432 to 473 (DLDECLMAQQGPSPCEHGGSCLNTPGSFNCLCPPGYTGSRCE). The EGF-like 12; calcium-binding domain maps to 475-511 (DHNECLSQPCHPGSTCLDLLATFHCLCPPGLEGQLCE). The EGF-like 13; calcium-binding domain maps to 513–549 (ETNECASAPCLNHADCHDLLNGFQCICLPGFSGTRCE). The EGF-like 14; calcium-binding domain maps to 551-587 (DIDECRSSPCANGGQCQDQPGAFHCKCLPGFEGPRCQ). Residues 589–625 (EVDECLSDPCPVGASCLDLPGAFFCLCPSGFTGQLCE) enclose the EGF-like 15; calcium-binding domain. EGF-like domains lie at 626 to 659 (VPLC…PGCA), 661 to 689 (PEDN…PECE), 691 to 727 (ELGG…PTCS), 729 to 765 (EMTA…PQCQ), 767 to 803 (STDY…PRCE), 806 to 842 (LRPS…GSCQ), 844 to 880 (LMDL…PLCN), 882 to 928 (PLSS…SLCQ), 930 to 966 (HVNP…QNCS), 968 to 1004 (ELDA…LRCE), 1006 to 1044 (DVDE…QWCE), 1046 to 1085 (EIDP…PTCS), 1087 to 1126 (RAPS…PDCL), and 1130 to 1171 (APKG…PRCQ). The N-linked (GlcNAc...) asparagine glycan is linked to Asn664. Cystine bridges form between Cys665-Cys672, Cys667-Cys677, Cys679-Cys688, Cys695-Cys706, Cys700-Cys715, Cys717-Cys726, Cys733-Cys744, Cys738-Cys753, Cys755-Cys764, Cys771-Cys782, Cys776-Cys791, Cys793-Cys802, Cys810-Cys821, Cys815-Cys830, Cys832-Cys841, Cys848-Cys859, Cys853-Cys868, Cys870-Cys879, Cys886-Cys907, Cys901-Cys916, Cys918-Cys927, Cys934-Cys945, Cys939-Cys954, Cys956-Cys965, Cys972-Cys983, Cys977-Cys992, Cys994-Cys1003, Cys1010-Cys1023, Cys1015-Cys1032, Cys1034-Cys1043, Cys1050-Cys1061, Cys1055-Cys1073, Cys1075-Cys1084, Cys1091-Cys1102, Cys1096-Cys1114, Cys1116-Cys1125, Cys1134-Cys1146, Cys1140-Cys1159, Cys1161-Cys1170, Cys1178-Cys1191, Cys1187-Cys1203, Cys1214-Cys1238, Cys1220-Cys1233, Cys1229-Cys1245, Cys1251-Cys1277, Cys1259-Cys1272, and Cys1268-Cys1284. Asn714 is a glycosylation site (N-linked (GlcNAc...) asparagine). A glycan (N-linked (GlcNAc...) asparagine) is linked at Asn964. Residue Asn1143 is glycosylated (N-linked (GlcNAc...) asparagine). LNR repeat units lie at residues 1170–1213 (CQKP…PWKG), 1214–1250 (CPSH…TPPA), and 1251–1294 (CTPA…PEWG). A disordered region spans residues 1347 to 1371 (AEEKLGGTRDPTYQERAAPQTQPLG). The helical transmembrane segment at 1448-1468 (PVLCSPVAGVILLALGALLVL) threads the bilayer. Over 1469–2003 (QLIRRRRREH…PINQGGEGKK (535 aa)) the chain is Cytoplasmic. The interval 1485 to 1508 (PGFTRRPRTQSAPHRRRPPLGEDS) is disordered. Residues 1489–1502 (RRPRTQSAPHRRRP) are compositionally biased toward basic residues. ANK repeat units lie at residues 1633 to 1665 (TGET…QPDR), 1666 to 1698 (AGRT…DART), 1700 to 1732 (DGTT…ARDK), 1733 to 1765 (WGKT…AQDN), and 1766 to 1798 (REQT…LRDQ). Disordered stretches follow at residues 1900-1927 (LSGV…RPNP) and 1968-2003 (PPPC…EGKK).

This sequence belongs to the NOTCH family. As to quaternary structure, heterodimer of a C-terminal fragment N(TM) and a N-terminal fragment N(EC) which are probably linked by disulfide bonds. Interacts with MAML1, MAML2 and MAML3 which act as transcriptional coactivators for NOTCH4. In terms of assembly, (Microbial infection) Interacts with Epstein-Barr virus (EBV) RK-BARF0. Synthesized in the endoplasmic reticulum as an inactive form which is proteolytically cleaved by a furin-like convertase in the trans-Golgi network before it reaches the plasma membrane to yield an active, ligand-accessible form. Cleavage results in a C-terminal fragment N(TM) and a N-terminal fragment N(EC). Following ligand binding, it is cleaved by TNF-alpha converting enzyme (TACE) to yield a membrane-associated intermediate fragment called notch extracellular truncation (NEXT). This fragment is then cleaved by presenilin dependent gamma-secretase to release a notch-derived peptide containing the intracellular domain (NICD) from the membrane. Post-translationally, phosphorylated. Highly expressed in the heart, moderately in the lung and placenta and at low levels in the liver, skeletal muscle, kidney, pancreas, spleen, lymph node, thymus, bone marrow and fetal liver. No expression was seen in adult brain or peripheral blood leukocytes.

Its subcellular location is the cell membrane. The protein localises to the nucleus. Functions as a receptor for membrane-bound ligands Jagged1, Jagged2 and Delta1 to regulate cell-fate determination. Upon ligand activation through the released notch intracellular domain (NICD) it forms a transcriptional activator complex with RBPJ/RBPSUH and activates genes of the enhancer of split locus. Affects the implementation of differentiation, proliferation and apoptotic programs. May regulate branching morphogenesis in the developing vascular system. This Homo sapiens (Human) protein is Neurogenic locus notch homolog protein 4.